Consider the following 464-residue polypeptide: Pup--protein ligase (464 aa).

Glutamate 14 lines the Mg(2+) pocket. An ATP-binding site is contributed by arginine 58. Tyrosine 60 lines the Mg(2+) pocket. The Proton acceptor role is filled by aspartate 62. Glutamate 68 serves as a coordination point for Mg(2+). ATP-binding residues include threonine 71 and tryptophan 430.

This sequence belongs to the Pup ligase/Pup deamidase family. Pup-conjugating enzyme subfamily.

It carries out the reaction ATP + [prokaryotic ubiquitin-like protein]-L-glutamate + [protein]-L-lysine = ADP + phosphate + N(6)-([prokaryotic ubiquitin-like protein]-gamma-L-glutamyl)-[protein]-L-lysine.. Its pathway is protein degradation; proteasomal Pup-dependent pathway. It participates in protein modification; protein pupylation. In terms of biological role, catalyzes the covalent attachment of the prokaryotic ubiquitin-like protein modifier Pup to the proteasomal substrate proteins, thereby targeting them for proteasomal degradation. This tagging system is termed pupylation. The ligation reaction involves the side-chain carboxylate of the C-terminal glutamate of Pup and the side-chain amino group of a substrate lysine. The polypeptide is Pup--protein ligase (Micrococcus luteus (strain ATCC 4698 / DSM 20030 / JCM 1464 / CCM 169 / CCUG 5858 / IAM 1056 / NBRC 3333 / NCIMB 9278 / NCTC 2665 / VKM Ac-2230) (Micrococcus lysodeikticus)).